Consider the following 478-residue polypeptide: Shikimate biosynthesis protein AroDE (478 aa).

The 3-dehydroquinate dehydratase stretch occupies residues 1-208; sequence MLCTIIRGPS…LNHHYFYNFT (208 aa). 3-dehydroquinate contacts are provided by residues S21, 29–31, and 55–57; these read EMR and TWK. Catalysis depends on H110, which acts as the Proton donor/acceptor; for 3-dehydroquinate dehydratase activity. The active-site Schiff-base intermediate with substrate; for 3-dehydroquinate dehydratase activity is K133. 2 residues coordinate 3-dehydroquinate: R171 and Q196. The interval 209–478 is shikimate 5-dehydrogenase; the sequence is NLSPQSQICA…VLASLFSIAA (270 aa). 226 to 228 lines the shikimate pocket; that stretch reads SIG. Residue K277 is the Proton acceptor; for shikimate dehydrogenase activity of the active site. 2 residues coordinate shikimate: N298 and D313. NADP(+)-binding positions include 337–341, 360–362, and G435; these read GAGGA and NRT. Residue Q442 coordinates shikimate.

In the N-terminal section; belongs to the type-I 3-dehydroquinase family. This sequence in the C-terminal section; belongs to the shikimate dehydrogenase family.

The enzyme catalyses 3-dehydroquinate = 3-dehydroshikimate + H2O. It catalyses the reaction shikimate + NADP(+) = 3-dehydroshikimate + NADPH + H(+). Its pathway is metabolic intermediate biosynthesis; chorismate biosynthesis; chorismate from D-erythrose 4-phosphate and phosphoenolpyruvate: step 3/7. It participates in metabolic intermediate biosynthesis; chorismate biosynthesis; chorismate from D-erythrose 4-phosphate and phosphoenolpyruvate: step 4/7. Bifunctional enzyme that catalyzes two sequential steps of the aromatic amino acids biosynthetic pathway. In the first reaction, the AroD domain catalyzes the cis-dehydration of 3-dehydroquinate (DHQ) and introduces the first double bond of the aromatic ring to yield 3-dehydroshikimate; in the second reaction, the AroE domain catalyzes the reversible NADPH linked reduction of 3-dehydroshikimate (DHSA) to yield shikimate (SA). The sequence is that of Shikimate biosynthesis protein AroDE from Chlamydia muridarum (strain MoPn / Nigg).